Here is a 244-residue protein sequence, read N- to C-terminus: 6-carboxyhexanoate--CoA ligase (244 aa).

The protein belongs to the BioW family. In terms of assembly, homodimer. Mg(2+) serves as cofactor.

The catalysed reaction is heptanedioate + ATP + CoA = 6-carboxyhexanoyl-CoA + AMP + diphosphate. The protein operates within metabolic intermediate metabolism; pimeloyl-CoA biosynthesis; pimeloyl-CoA from pimelate: step 1/1. Catalyzes the transformation of pimelate into pimeloyl-CoA with concomitant hydrolysis of ATP to AMP. The polypeptide is 6-carboxyhexanoate--CoA ligase (Methanococcus maripaludis (strain C7 / ATCC BAA-1331)).